The primary structure comprises 889 residues: Disease resistance protein UNI (889 aa).

Residues asparagine 19 to arginine 64 are a coiled coil. Residues glycine 131–proline 152 form a disordered region. Positions serine 137–valine 440 constitute an NB-ARC domain. Glycine 179 to threonine 186 is a binding site for ATP. LRR repeat units lie at residues tryptophan 510–cysteine 532, serine 533–tyrosine 555, glutamine 557–leucine 580, valine 581–leucine 603, lysine 604–arginine 625, leucine 626–leucine 652, glutamine 653–leucine 676, methionine 698–threonine 721, and cysteine 825–methionine 848.

It belongs to the disease resistance NB-LRR family. As to quaternary structure, interacts with RPT2A.

Functionally, involved in disease resistance via the salicylic acid (SA) signaling pathway. Involved in shoot architecture development via the cytokinin signaling pathway. The chain is Disease resistance protein UNI from Arabidopsis thaliana (Mouse-ear cress).